The primary structure comprises 506 residues: MKEYRVYLERARSRQQDFLYPLIFREYIYGLAYSHNFNKSIFVENGGYDNKYSLLNVKRLITRMYQQNHLIISANDSNKNPFLGYNNNFYSQIISEGFAIVVEIPFFLQLSSSLEEAEIIKSYKNLRSIHSVFPFLEDKFTYLNYVSDIRIPYPIHLEILVQILRYWVKDVPFFHLLRVFLYHFCNWNCFIPTKKSISTFSKSNPRLFLFLYNFYVCEYESIFLFLRNKSYHLRLKSFSVFFERIFFYAKREHLVEVFSKDFSYTLPFFKDPNIHYVRYQGKCILASKNVPFLMNKWKYYFIHLWQCFFDVWSQPRTININQLSEHSFQLLGYFSNVRLNRSVVRSQMLENTFLIEIVSKKLDIIVPIIPLIRSLAKAKFCNVLGHPISKPVWADSSDFDIIERFLRICRNLSHYYNGSSKKKSLYRIKYILRLSCIKTLACKHKSTVRAFLKRSGSEELLEEFFTEEEEILSLIFPRDSFTLHRFHRNRIWYLDILFSNDLVNDE.

The protein belongs to the intron maturase 2 family. MatK subfamily.

The protein resides in the plastid. Its subcellular location is the chloroplast. Functionally, usually encoded in the trnK tRNA gene intron. Probably assists in splicing its own and other chloroplast group II introns. This Trifolium microcephalum (Small-head clover) protein is Maturase K.